A 256-amino-acid polypeptide reads, in one-letter code: H-2 class II histocompatibility antigen, A-B alpha chain (256 aa).

The signal sequence occupies residues 1 to 23 (MPRSRALILGVLALTTMLSLCGG). The tract at residues 24–111 (EDDIEADHVG…KRSNSTPATN (88 aa)) is alpha-1. Topologically, residues 24–218 (EDDIEADHVG…IPAPMSELTE (195 aa)) are extracellular. Positions 112-205 (EAPQATVFPK…GLEEPVLKHW (94 aa)) are alpha-2. Positions 114–206 (PQATVFPKSP…LEEPVLKHWE (93 aa)) constitute an Ig-like C1-type domain. Cys-134 and Cys-190 are joined by a disulfide. N-linked (GlcNAc...) asparagine glycosylation occurs at Asn-145. Positions 206-218 (EPEIPAPMSELTE) are connecting peptide. A helical transmembrane segment spans residues 219 to 244 (TVVCALGLSVGLVGIVVGTIFIIQGL). The Cytoplasmic portion of the chain corresponds to 245–256 (RSGGTSRHPGPL).

This sequence belongs to the MHC class II family.

Its subcellular location is the membrane. This chain is H-2 class II histocompatibility antigen, A-B alpha chain (H2-Aa), found in Mus musculus (Mouse).